The chain runs to 651 residues: Gag-Pro polyprotein (651 aa).

Residue Gly2 is the site of N-myristoyl glycine; by host attachment. The interval Gln93–Pro144 is disordered. Ser105 carries the phosphoserine; by host MAPK1 modification. A PPXY motif motif is present at residues Pro118–Tyr121. The short motif at Pro124–Pro127 is the PTAP/PSAP motif element. 2 consecutive CCHC-type zinc fingers follow at residues Gln355 to Gln372 and Gly378 to Arg395. The region spanning Ile476–Ala554 is the Peptidase A2 domain. Asp481 (for protease activity; shared with dimeric partner) is an active-site residue.

As to quaternary structure, homodimer; the homodimers are part of the immature particles. Interacts with human TSG101 and NEDD4; these interactions are essential for budding and release of viral particles. In terms of assembly, homodimer; further assembles as homohexamers. Post-translationally, specific enzymatic cleavages by the viral protease yield mature proteins. The polyprotein is cleaved during and after budding, this process is termed maturation. The protease is autoproteolytically processed at its N- and C-termini. In terms of processing, phosphorylation of the matrix protein p19 by MAPK1 seems to play a role in budding. Myristoylated. Myristoylation of the matrix (MA) domain mediates the transport and binding of Gag polyproteins to the host plasma membrane and is required for the assembly of viral particles.

It is found in the virion. The matrix domain targets Gag, Gag-Pro and Gag-Pro-Pol polyproteins to the plasma membrane via a multipartite membrane binding signal, that includes its myristoylated N-terminus. In terms of biological role, matrix protein. Functionally, forms the spherical core of the virus that encapsulates the genomic RNA-nucleocapsid complex. Its function is as follows. Binds strongly to viral nucleic acids and promote their aggregation. Also destabilizes the nucleic acids duplexes via highly structured zinc-binding motifs. The aspartyl protease mediates proteolytic cleavages of Gag and Gag-Pol polyproteins during or shortly after the release of the virion from the plasma membrane. Cleavages take place as an ordered, step-wise cascade to yield mature proteins. This process is called maturation. Displays maximal activity during the budding process just prior to particle release from the cell. Cleaves the translation initiation factor eIF4G leading to the inhibition of host cap-dependent translation. This is Gag-Pro polyprotein (gag-pro) from Human T-cell leukemia virus 1 (strain Japan ATK-1 subtype A) (HTLV-1).